The sequence spans 156 residues: Small ribosomal subunit protein uS7c (156 aa).

It belongs to the universal ribosomal protein uS7 family. In terms of assembly, part of the 30S ribosomal subunit.

It localises to the plastid. It is found in the chloroplast. In terms of biological role, one of the primary rRNA binding proteins, it binds directly to 16S rRNA where it nucleates assembly of the head domain of the 30S subunit. The sequence is that of Small ribosomal subunit protein uS7c (rps7) from Phaeodactylum tricornutum (strain CCAP 1055/1).